The primary structure comprises 92 residues: Putative phosphotransferase enzyme IIB component BB_0367 (92 aa).

The 83-residue stretch at I10 to Q92 folds into the PTS EIIB type-1 domain.

The protein resides in the cytoplasm. Functionally, the phosphoenolpyruvate-dependent sugar phosphotransferase system (PTS), a major carbohydrate active -transport system, catalyzes the phosphorylation of incoming sugar substrates concomitant with their translocation across the cell membrane. In Borreliella burgdorferi (strain ATCC 35210 / DSM 4680 / CIP 102532 / B31) (Borrelia burgdorferi), this protein is Putative phosphotransferase enzyme IIB component BB_0367.